Consider the following 360-residue polypeptide: 3-isopropylmalate dehydrogenase (360 aa).

Residue 76 to 89 participates in NAD(+) binding; sequence GPKWDKIERDIRPE. Positions 96, 106, 134, and 224 each coordinate substrate. The Mg(2+) site is built by D224, D248, and D252. 282–294 serves as a coordination point for NAD(+); sequence GSAPDIAGQGIAN.

It belongs to the isocitrate and isopropylmalate dehydrogenases family. LeuB type 1 subfamily. Homodimer. The cofactor is Mg(2+). It depends on Mn(2+) as a cofactor.

The protein localises to the cytoplasm. The enzyme catalyses (2R,3S)-3-isopropylmalate + NAD(+) = 4-methyl-2-oxopentanoate + CO2 + NADH. Its pathway is amino-acid biosynthesis; L-leucine biosynthesis; L-leucine from 3-methyl-2-oxobutanoate: step 3/4. Catalyzes the oxidation of 3-carboxy-2-hydroxy-4-methylpentanoate (3-isopropylmalate) to 3-carboxy-4-methyl-2-oxopentanoate. The product decarboxylates to 4-methyl-2 oxopentanoate. This chain is 3-isopropylmalate dehydrogenase, found in Pseudomonas fluorescens (strain ATCC BAA-477 / NRRL B-23932 / Pf-5).